The following is a 319-amino-acid chain: HTH-type transcriptional regulator YidZ (319 aa).

Positions Leu8–Thr65 constitute an HTH lysR-type domain. Positions Val25–Ala44 form a DNA-binding region, H-T-H motif.

The protein belongs to the LysR transcriptional regulatory family.

In terms of biological role, involved in anaerobic NO protection. This Escherichia coli O157:H7 (strain EC4115 / EHEC) protein is HTH-type transcriptional regulator YidZ.